Here is a 60-residue protein sequence, read N- to C-terminus: Large ribosomal subunit protein bL33 (60 aa).

The protein belongs to the bacterial ribosomal protein bL33 family.

The sequence is that of Large ribosomal subunit protein bL33 from Chlorobium limicola (strain DSM 245 / NBRC 103803 / 6330).